The sequence spans 134 residues: Large ribosomal subunit protein uL22 (134 aa).

The protein belongs to the universal ribosomal protein uL22 family. In terms of assembly, part of the 50S ribosomal subunit.

This protein binds specifically to 23S rRNA; its binding is stimulated by other ribosomal proteins, e.g. L4, L17, and L20. It is important during the early stages of 50S assembly. It makes multiple contacts with different domains of the 23S rRNA in the assembled 50S subunit and ribosome. In terms of biological role, the globular domain of the protein is located near the polypeptide exit tunnel on the outside of the subunit, while an extended beta-hairpin is found that lines the wall of the exit tunnel in the center of the 70S ribosome. The protein is Large ribosomal subunit protein uL22 of Rhodococcus erythropolis (strain PR4 / NBRC 100887).